A 1151-amino-acid polypeptide reads, in one-letter code: Protein kinase C-like 1 (1151 aa).

REM-1 domains follow at residues 1–67 (MSFS…KTAQ) and 106–183 (KYDC…INVD). The disordered stretch occupies residues 64 to 88 (KTAQQSQGENGSEDNERCNSKEYGF). In terms of domain architecture, C2 spans 190 to 309 (QPNDIMDNQQ…IRKKKAGQTN (120 aa)). S226 bears the Phosphoserine mark. A disordered region spans residues 306 to 331 (GQTNEQQGWVNASNINGGSSLASEEG). 2 Phorbol-ester/DAG-type zinc fingers span residues 414-461 (GHHF…VTKC) and 481-531 (PHRF…PDFC). 2 disordered regions span residues 546–620 (QDTK…IIDK) and 649–669 (AQQTAEFSSPEKTLDPTSNRR). Positions 560 to 577 (PSAQLGSSIGTANGSDLS) are enriched in polar residues. Residues 605-620 (VGRDSPTKQHDPIIDK) show a composition bias toward basic and acidic residues. The residue at position 761 (S761) is a Phosphoserine. Positions 782 to 816 (LAPTSTHASRTTDQQSPQKSQTSTSAKHKKRAAKR) are disordered. The span at 792-806 (TTDQQSPQKSQTSTS) shows a compositional bias: low complexity. Residues 807 to 816 (AKHKKRAAKR) show a composition bias toward basic residues. The region spanning 824–1083 (FVLLKVLGKG…ADEVMEEPFF (260 aa)) is the Protein kinase domain. ATP is bound by residues 830-838 (LGKGNFGKV) and K853. D949 acts as the Proton acceptor in catalysis. The AGC-kinase C-terminal domain maps to 1084-1151 (RNINFDDILN…FSFMPDDLDL (68 aa)).

The protein belongs to the protein kinase superfamily. AGC Ser/Thr protein kinase family. PKC subfamily.

It catalyses the reaction L-seryl-[protein] + ATP = O-phospho-L-seryl-[protein] + ADP + H(+). The enzyme catalyses L-threonyl-[protein] + ATP = O-phospho-L-threonyl-[protein] + ADP + H(+). In terms of biological role, required for cell growth and for the G2-&gt;M transition of the cell division cycle. Mediates a protein kinase cascade; it activates BCK1 which itself activates MKK1/MKK2. The polypeptide is Protein kinase C-like 1 (PKC1) (Saccharomyces cerevisiae (strain ATCC 204508 / S288c) (Baker's yeast)).